The chain runs to 101 residues: uncharacterized protein (101 aa).

This is an uncharacterized protein from Enterobacteria phage T3 (Bacteriophage T3).